Here is a 344-residue protein sequence, read N- to C-terminus: Mitochondrial mRNA pseudouridine synthase RPUSD3 (344 aa).

Residues 1–41 (MGGWRVLGQASGGWRRGLGIRATSTAAGFGTKARHQLQRRG) constitute a mitochondrion transit peptide. Positions 29–59 (FGTKARHQLQRRGASKPSDPPGDQPFPGLLR) are disordered. Residues 32–42 (KARHQLQRRGA) are compositionally biased toward basic residues. S64 is subject to Phosphoserine.

This sequence belongs to the pseudouridine synthase RluA family. As to quaternary structure, forms a regulatory protein-RNA complex, consisting of RCC1L, NGRN, RPUSD3, RPUSD4, TRUB2, FASTKD2 and 16S mt-rRNA.

Its subcellular location is the mitochondrion matrix. It catalyses the reaction a uridine in mRNA = a pseudouridine in mRNA. Functionally, catalyzes uridine to pseudouridine isomerization (pseudouridylation) of specific mitochondrial mRNAs (mt-mRNAs), a post-transcriptional modification necessary for their translation. Acts at position 390 in COXI mt-mRNA and at position 697-699 in mitochondrial COXIII mt-mRNA. As a component of a functional protein-RNA module, consisting of RCC1L, NGRN, RPUSD3, RPUSD4, TRUB2, FASTKD2 and 16S mitochondrial ribosomal RNA (16S mt-rRNA), controls 16S mt-rRNA abundance and may play a role in mitochondrial ribosome biogenesis. The polypeptide is Mitochondrial mRNA pseudouridine synthase RPUSD3 (RPUSD3) (Bos taurus (Bovine)).